We begin with the raw amino-acid sequence, 242 residues long: Small ribosomal subunit protein uS3 (242 aa).

The KH type-2 domain occupies 39–110; sequence IRKFIHKKYG…QVRINVVEVE (72 aa). The tract at residues 216 to 242 is disordered; the sequence is QPMPVGAAPRRRASRRPQQFEDRSNEG. Residues 233 to 242 are compositionally biased toward basic and acidic residues; sequence QQFEDRSNEG.

The protein belongs to the universal ribosomal protein uS3 family. Part of the 30S ribosomal subunit. Forms a tight complex with proteins S10 and S14.

In terms of biological role, binds the lower part of the 30S subunit head. Binds mRNA in the 70S ribosome, positioning it for translation. The sequence is that of Small ribosomal subunit protein uS3 from Synechococcus sp. (strain CC9605).